The primary structure comprises 367 residues: Ferrochelatase (367 aa).

The Fe cation site is built by H226 and E307.

The protein belongs to the ferrochelatase family.

Its subcellular location is the cytoplasm. The catalysed reaction is heme b + 2 H(+) = protoporphyrin IX + Fe(2+). The protein operates within porphyrin-containing compound metabolism; protoheme biosynthesis; protoheme from protoporphyrin-IX: step 1/1. In terms of biological role, catalyzes the ferrous insertion into protoporphyrin IX. This chain is Ferrochelatase, found in Burkholderia pseudomallei (strain 668).